Reading from the N-terminus, the 305-residue chain is Epoxyqueuosine reductase (305 aa).

The active-site Proton donor is the D128. The 4Fe-4S ferredoxin-type domain occupies 170–202 (LSLTSDTPHAKYCGTCRKCLDICPTKAIVHPFV). Positions 182, 185, 188, 192, 208, 236, 239, and 243 each coordinate [4Fe-4S] cluster.

The protein belongs to the QueG family. As to quaternary structure, monomer. It depends on cob(II)alamin as a cofactor. [4Fe-4S] cluster is required as a cofactor.

It localises to the cytoplasm. The catalysed reaction is epoxyqueuosine(34) in tRNA + AH2 = queuosine(34) in tRNA + A + H2O. The protein operates within tRNA modification; tRNA-queuosine biosynthesis. Its function is as follows. Catalyzes the conversion of epoxyqueuosine (oQ) to queuosine (Q), which is a hypermodified base found in the wobble positions of tRNA(Asp), tRNA(Asn), tRNA(His) and tRNA(Tyr). In Atelocyanobacterium thalassa (isolate ALOHA), this protein is Epoxyqueuosine reductase.